The following is a 132-amino-acid chain: UPF0060 membrane protein SG1469 (132 aa).

Transmembrane regions (helical) follow at residues 5 to 25 (VLLYIATAVAAILGCYLPYCY), 32 to 52 (LLLIPAALSLIAFVGLLVLYP), and 60 to 80 (AAYGGVYILTAFLWLRFIDGI).

This sequence belongs to the UPF0060 family.

It localises to the cell inner membrane. The chain is UPF0060 membrane protein SG1469 from Sodalis glossinidius (strain morsitans).